Here is a 258-residue protein sequence, read N- to C-terminus: Capsid protein (258 aa).

Positions 3–20 (KRPGDIIISTPGSKVRRR) match the Bipartite nuclear localization signal motif. Positions 41-55 (RKRAWVNRPMYRKPT) match the Nuclear localization signal motif. Residues 69–86 (CEGPCKVQSFEQRDDVKH) fold into a zinc finger. The short motif at 102–123 (LTHRVGKRFCIKSIYILGKIWL) is the Nuclear export signal element. The Bipartite nuclear localization signal motif lies at 202–249 (KRFYRLNHHVTYNHQEAGKYENHTENALLLYMACTHASNPVYATLKIR).

Belongs to the geminiviridae capsid protein family. As to quaternary structure, homomultimer. Binds to single-stranded and double-stranded viral DNA. Interacts (via nuclear localization signals) with host importin alpha-1a.

The protein localises to the virion. It is found in the host nucleus. Its function is as follows. Encapsidates the viral DNA into characteristic twinned ('geminate') particles. Binds the genomic viral ssDNA and shuttles it into and out of the cell nucleus. The CP of bipartite geminiviruses is not required for cell-to-cell or systemic movement. The protein is Capsid protein of African cassava mosaic virus (isolate West Kenyan 844) (ACMV).